The following is a 255-amino-acid chain: Thiazole synthase (255 aa).

K95 functions as the Schiff-base intermediate with DXP in the catalytic mechanism. 1-deoxy-D-xylulose 5-phosphate is bound by residues G156, 182–183, and 204–205; these read AG and NT.

The protein belongs to the ThiG family. As to quaternary structure, homotetramer. Forms heterodimers with either ThiH or ThiS.

The protein resides in the cytoplasm. It catalyses the reaction [ThiS sulfur-carrier protein]-C-terminal-Gly-aminoethanethioate + 2-iminoacetate + 1-deoxy-D-xylulose 5-phosphate = [ThiS sulfur-carrier protein]-C-terminal Gly-Gly + 2-[(2R,5Z)-2-carboxy-4-methylthiazol-5(2H)-ylidene]ethyl phosphate + 2 H2O + H(+). It participates in cofactor biosynthesis; thiamine diphosphate biosynthesis. Functionally, catalyzes the rearrangement of 1-deoxy-D-xylulose 5-phosphate (DXP) to produce the thiazole phosphate moiety of thiamine. Sulfur is provided by the thiocarboxylate moiety of the carrier protein ThiS. In vitro, sulfur can be provided by H(2)S. The protein is Thiazole synthase of Aeromonas salmonicida (strain A449).